Reading from the N-terminus, the 893-residue chain is NEDD4-binding protein 1 (893 aa).

The KH-like domain maps to 59 to 143; it reads QEAVHSAKEY…IQQFVKLFES (85 aa). The disordered stretch occupies residues 213–243; it reads EYTQSAATGPSSARDEVVVQEDSRNKARTPV. Residues 214-223 are compositionally biased toward polar residues; the sequence is YTQSAATGPS. Basic and acidic residues predominate over residues 225–237; it reads ARDEVVVQEDSRN. Threonine 241 is subject to Phosphothreonine. 3 positions are modified to phosphoserine: serine 257, serine 269, and serine 299. 3 disordered regions span residues 273-339, 394-433, and 472-564; these read DALS…DGKD, RDFP…QSHT, and IWGS…PPLP. Polar residues-rich tracts occupy residues 405–433 and 523–537; these read ASQS…QSHT and GFQQ…NNTK. Pro residues predominate over residues 551 to 564; that stretch reads QPKPNYPPLSPPLP. Position 560 is a phosphoserine (serine 560). Positions 615-767 constitute an RNase NYN domain; sequence LKHIVIDGSN…LGRNGPRLEE (153 aa). Positions 793-820 are disordered; the sequence is PGFRSPSTQVANNSHQPPPRIQTSSSPW. Over residues 797–820 the composition is skewed to polar residues; sequence SPSTQVANNSHQPPPRIQTSSSPW. The interval 846–893 is coCUN; the sequence is RSSAETSELREALLKIFPDSEQKLKIDQILAAHPYMKDLNALSALVLD.

The protein belongs to the N4BP1 family. As to quaternary structure, interacts with NEDD4. Interacts with ITCH (via WW domain 2). In terms of processing, proteolytically cleaved by CASP8 downstream of TLR3 or TLR4, leading to its inactivation. Mainly cleaved at Asp-488 by CASP8. Cleaved by caspase-like protein MALT1, leading to its inactivation. Mono- and polyubiquitinated on the CoCUN region. Monoubiquitinated by NEDD4. Polyubiquitinated, leading to its degradation by the proteasome. Sumoylated with SUMO1, abrogating polyubiquitination and subsequent degradation. Desumoylated by SENP1, leading to accumulation in PML nuclear bodies.

The protein localises to the cytoplasm. Its subcellular location is the cytosol. The protein resides in the nucleus. It localises to the nucleolus. It is found in the PML body. With respect to regulation, proteolytic cleavage by CASP8 or MALT1 leads to its inactivation. Functionally, potent suppressor of cytokine production that acts as a regulator of innate immune signaling and inflammation. Acts as a key negative regulator of select cytokine and chemokine responses elicited by TRIF-independent Toll-like receptors (TLRs), thereby limiting inflammatory cytokine responses to minor insults. In response to more threatening pathogens, cleaved by CASP8 downstream of TLR3 or TLR4, leading to its inactivation, thereby allowing production of inflammatory cytokines. Acts as a restriction factor against some viruses: restricts viral replication by binding to mRNA viruses and mediating their degradation via its ribonuclease activity. Also acts as an inhibitor of the E3 ubiquitin-protein ligase ITCH: acts by interacting with the second WW domain of ITCH, leading to compete with ITCH's substrates and impairing ubiquitination of substrates. The chain is NEDD4-binding protein 1 from Mus musculus (Mouse).